The following is a 164-amino-acid chain: uncharacterized protein (164 aa).

The transit peptide at 1-60 directs the protein to the chloroplast; it reads MERSASVGVNDGRFGGNQFYSPSFSSSSSSSSMRHVNYSCGSCGYELNLSSTNRITSTIG.

The protein localises to the plastid. It localises to the chloroplast. This is an uncharacterized protein from Arabidopsis thaliana (Mouse-ear cress).